Consider the following 163-residue polypeptide: 6,7-dimethyl-8-ribityllumazine synthase (163 aa).

Residues Phe27, 58-60 (ALE), and 87-89 (CVI) contribute to the 5-amino-6-(D-ribitylamino)uracil site. Residue 92-93 (DT) coordinates (2S)-2-hydroxy-3-oxobutyl phosphate. His95 (proton donor) is an active-site residue. Position 120 (Asn120) interacts with 5-amino-6-(D-ribitylamino)uracil. Residue Arg134 coordinates (2S)-2-hydroxy-3-oxobutyl phosphate.

The protein belongs to the DMRL synthase family.

It carries out the reaction (2S)-2-hydroxy-3-oxobutyl phosphate + 5-amino-6-(D-ribitylamino)uracil = 6,7-dimethyl-8-(1-D-ribityl)lumazine + phosphate + 2 H2O + H(+). It functions in the pathway cofactor biosynthesis; riboflavin biosynthesis; riboflavin from 2-hydroxy-3-oxobutyl phosphate and 5-amino-6-(D-ribitylamino)uracil: step 1/2. Catalyzes the formation of 6,7-dimethyl-8-ribityllumazine by condensation of 5-amino-6-(D-ribitylamino)uracil with 3,4-dihydroxy-2-butanone 4-phosphate. This is the penultimate step in the biosynthesis of riboflavin. The sequence is that of 6,7-dimethyl-8-ribityllumazine synthase from Afipia carboxidovorans (strain ATCC 49405 / DSM 1227 / KCTC 32145 / OM5) (Oligotropha carboxidovorans).